A 943-amino-acid chain; its full sequence is Isoleucine--tRNA ligase (943 aa).

The 'HIGH' region motif lies at 59–69 (PYANGRIHLGH). Residue E577 participates in L-isoleucyl-5'-AMP binding. The short motif at 618-622 (KMSKS) is the 'KMSKS' region element. An ATP-binding site is contributed by K621. Residues C906, C909, C926, and C929 each coordinate Zn(2+).

The protein belongs to the class-I aminoacyl-tRNA synthetase family. IleS type 1 subfamily. Monomer. Zn(2+) is required as a cofactor.

The protein resides in the cytoplasm. It catalyses the reaction tRNA(Ile) + L-isoleucine + ATP = L-isoleucyl-tRNA(Ile) + AMP + diphosphate. Catalyzes the attachment of isoleucine to tRNA(Ile). As IleRS can inadvertently accommodate and process structurally similar amino acids such as valine, to avoid such errors it has two additional distinct tRNA(Ile)-dependent editing activities. One activity is designated as 'pretransfer' editing and involves the hydrolysis of activated Val-AMP. The other activity is designated 'posttransfer' editing and involves deacylation of mischarged Val-tRNA(Ile). This Stenotrophomonas maltophilia (strain R551-3) protein is Isoleucine--tRNA ligase.